Reading from the N-terminus, the 382-residue chain is Pyrimidine monooxygenase RutA (382 aa).

Residues 68 to 69 (IK), asparagine 134, glutamate 143, 159 to 160 (RY), and serine 209 contribute to the FMN site.

It belongs to the NtaA/SnaA/DszA monooxygenase family. RutA subfamily.

It catalyses the reaction uracil + FMNH2 + NADH + O2 = (Z)-3-ureidoacrylate + FMN + NAD(+) + H2O + H(+). The catalysed reaction is thymine + FMNH2 + NADH + O2 = (Z)-2-methylureidoacrylate + FMN + NAD(+) + H2O + H(+). Catalyzes the pyrimidine ring opening between N-3 and C-4 by an unusual flavin hydroperoxide-catalyzed mechanism, adding oxygen atoms in the process to yield ureidoacrylate peracid, that immediately reacts with FMN forming ureidoacrylate and FMN-N(5)-oxide. The FMN-N(5)-oxide reacts spontaneously with NADH to produce FMN. Requires the flavin reductase RutF to regenerate FMN in vivo. This is Pyrimidine monooxygenase RutA from Escherichia coli O150:H5 (strain SE15).